Reading from the N-terminus, the 394-residue chain is Ketoisovalerate oxidoreductase subunit VorA (394 aa).

As to quaternary structure, heterotetramer of one alpha, one beta, one delta and one gamma chain.

The enzyme catalyses 3-methyl-2-oxobutanoate + 2 oxidized [2Fe-2S]-[ferredoxin] + CoA = 2-methylpropanoyl-CoA + 2 reduced [2Fe-2S]-[ferredoxin] + CO2 + H(+). The sequence is that of Ketoisovalerate oxidoreductase subunit VorA (vorA) from Pyrococcus furiosus (strain ATCC 43587 / DSM 3638 / JCM 8422 / Vc1).